A 110-amino-acid polypeptide reads, in one-letter code: MSMTDLLNAEDIKKAVGAFSAIDSFDHKKFFQMVGLKKKSADDVKKVFHILDKDKSGFIEEDELGFILKGFSPDARDLSAKETKTLMAAGDKDGDGKIGVDEFSTLVAES.

At Ser-2 the chain carries N-acetylserine. 2 positions are modified to phosphoserine: Ser-2 and Ser-24. 2 consecutive EF-hand domains span residues 39-74 and 78-110; these read KSAD…FSPD and LSAK…VAES. 11 residues coordinate Ca(2+): Asp-52, Asp-54, Ser-56, Phe-58, Glu-60, Glu-63, Asp-91, Asp-93, Asp-95, Lys-97, and Glu-102.

This sequence belongs to the parvalbumin family.

Functionally, in muscle, parvalbumin is thought to be involved in relaxation after contraction. It binds two calcium ions. This is Parvalbumin alpha (PVALB) from Macaca fuscata fuscata (Japanese macaque).